The sequence spans 614 residues: Leucine-rich repeat and immunoglobulin-like domain-containing nogo receptor-interacting protein 1 (614 aa).

The first 35 residues, 1–35 (MLAGGVRSMPSPLLACWQPILLLVLGSVLSGSATG), serve as a signal peptide directing secretion. 2 cysteine pairs are disulfide-bonded: cysteine 36–cysteine 42 and cysteine 40–cysteine 51. The LRRNT domain maps to 36 to 65 (CPPRCECSAQDRAVLCHRKRFVAVPEGIPT). Residues 36 to 555 (CPPRCECSAQ…FDIKTLIIAT (520 aa)) lie on the Extracellular side of the membrane. LRR repeat units follow at residues 66–87 (ETRLLDLGKNRIKTLNQDEFAS), 90–111 (HLEELELNENIVSAVEPGAFNN), 114–135 (NLRTLGLRSNRLKLIPLGVFTG), 138–159 (NLTKLDISENKIVILLDYMFQD), 162–183 (NLKSLEVGDNDLVYISHRAFSG), 186–207 (SLEQLTLEKCNLTSIPTEALSH), 210–231 (GLIVLRLRHLNINAIRDYSFKR), 258–279 (NLTSLSITHCNLTAVPYLAVRH), 282–303 (YLRFLNLSYNPISTIEGSMLHE), 306–327 (RLQEIQLVGGQLAMVEPYAFRG), and 330–351 (YLRVLNVSGNQLTTLEESVFHS). Residue asparagine 138 is glycosylated (N-linked (GlcNAc...) asparagine). N-linked (GlcNAc...) asparagine glycosylation is present at asparagine 196. N-linked (GlcNAc...) asparagine glycans are attached at residues asparagine 258, asparagine 268, and asparagine 287. An N-linked (GlcNAc...) asparagine glycan is attached at asparagine 335. Residues 363–417 (NPLACDCRLLWVFRRRWRLNFNRQQPTCATPEFVQGKEFKDFPDVLLPNYFTCRR) form the LRRCT domain. 3 disulfide bridges follow: cysteine 367–cysteine 390, cysteine 369–cysteine 415, and cysteine 440–cysteine 491. In terms of domain architecture, Ig-like C2-type spans 405 to 507 (PDVLLPNYFT…GNDSMPAHLH (103 aa)). Residues asparagine 486 and asparagine 536 are each glycosylated (N-linked (GlcNAc...) asparagine). The chain crosses the membrane as a helical span at residues 556–576 (TMGFISFLGVVLFCLVLLFLW). The Cytoplasmic segment spans residues 577–614 (SRGKGNTKHNIEIEYVPRKSDAGISSADAPRKFNMKMI). Serine 596 is modified (phosphoserine).

As to quaternary structure, homotetramer. Forms a ternary complex with RTN4R/NGFR and RTN4R/TNFRSF19. Interacts with NGRF, RTN4R and MYT1L. N-glycosylated. Contains predominantly high-mannose glycans.

The protein resides in the cell membrane. Functional component of the Nogo receptor signaling complex (RTN4R/NGFR) in RhoA activation responsible for some inhibition of axonal regeneration by myelin-associated factors. Is also an important negative regulator of oligodentrocyte differentiation and axonal myelination. Acts in conjunction with RTN4 and RTN4R in regulating neuronal precursor cell motility during cortical development. The chain is Leucine-rich repeat and immunoglobulin-like domain-containing nogo receptor-interacting protein 1 (LINGO1) from Macaca fascicularis (Crab-eating macaque).